A 276-amino-acid polypeptide reads, in one-letter code: Vitamin B12-binding protein (276 aa).

The N-terminal stretch at 1 to 20 (MIVRFLCWLTGLLLCTAAYA) is a signal peptide. The Fe/B12 periplasmic-binding domain occupies 24-273 (RVISLAPHAT…QLTALSPGSS (250 aa)). C186 and C262 are disulfide-bonded.

It belongs to the BtuF family. As to quaternary structure, the complex is composed of two ATP-binding proteins (BtuD), two transmembrane proteins (BtuC) and a solute-binding protein (BtuF).

The protein resides in the periplasm. Its function is as follows. Part of the ABC transporter complex BtuCDF involved in vitamin B12 import. Binds vitamin B12 and delivers it to the periplasmic surface of BtuC. This Pectobacterium carotovorum subsp. carotovorum (strain PC1) protein is Vitamin B12-binding protein.